The chain runs to 459 residues: tRNA modification GTPase MnmE (459 aa).

Positions 23, 88, and 127 each coordinate (6S)-5-formyl-5,6,7,8-tetrahydrofolate. The region spanning 223-381 is the TrmE-type G domain; it reads GLNTVIIGKP…LKDTIENMFA (159 aa). Asparagine 233 is a K(+) binding site. Residues 233–238, 252–258, and 277–280 contribute to the GTP site; these read NVGKSS, TDIPGTT, and DTAG. Position 237 (serine 237) interacts with Mg(2+). Threonine 252, isoleucine 254, and threonine 257 together coordinate K(+). Mg(2+) is bound at residue threonine 258. Residue lysine 459 participates in (6S)-5-formyl-5,6,7,8-tetrahydrofolate binding.

This sequence belongs to the TRAFAC class TrmE-Era-EngA-EngB-Septin-like GTPase superfamily. TrmE GTPase family. In terms of assembly, homodimer. Heterotetramer of two MnmE and two MnmG subunits. K(+) serves as cofactor.

Its subcellular location is the cytoplasm. Functionally, exhibits a very high intrinsic GTPase hydrolysis rate. Involved in the addition of a carboxymethylaminomethyl (cmnm) group at the wobble position (U34) of certain tRNAs, forming tRNA-cmnm(5)s(2)U34. The chain is tRNA modification GTPase MnmE from Clostridium acetobutylicum (strain ATCC 824 / DSM 792 / JCM 1419 / IAM 19013 / LMG 5710 / NBRC 13948 / NRRL B-527 / VKM B-1787 / 2291 / W).